A 342-amino-acid chain; its full sequence is Arrestin domain-containing protein 5 (342 aa).

The protein belongs to the arrestin family. Testis-enriched.

It is found in the membrane. In terms of biological role, plays an essential role in spermatogenesis. May be involved in the anchoring of the sperm head to the tail during spermatogenesis by affecting SEC22A-mediated SUN5 and NDC1 transport and localization. The polypeptide is Arrestin domain-containing protein 5 (ARRDC5) (Homo sapiens (Human)).